A 189-amino-acid chain; its full sequence is Histidinol-phosphate aminotransferase (189 aa).

Belongs to the class-II pyridoxal-phosphate-dependent aminotransferase family. Histidinol-phosphate aminotransferase subfamily. As to quaternary structure, homodimer. It depends on pyridoxal 5'-phosphate as a cofactor.

It carries out the reaction L-histidinol phosphate + 2-oxoglutarate = 3-(imidazol-4-yl)-2-oxopropyl phosphate + L-glutamate. The protein operates within amino-acid biosynthesis; L-histidine biosynthesis; L-histidine from 5-phospho-alpha-D-ribose 1-diphosphate: step 7/9. This is Histidinol-phosphate aminotransferase (hisC) from Thiocapsa roseopersicina.